The chain runs to 355 residues: Uroporphyrinogen decarboxylase (355 aa).

Substrate contacts are provided by residues 27 to 31 (RQAGR), Asp78, Tyr155, Ser210, and His328.

The protein belongs to the uroporphyrinogen decarboxylase family. As to quaternary structure, homodimer.

Its subcellular location is the cytoplasm. It carries out the reaction uroporphyrinogen III + 4 H(+) = coproporphyrinogen III + 4 CO2. The protein operates within porphyrin-containing compound metabolism; protoporphyrin-IX biosynthesis; coproporphyrinogen-III from 5-aminolevulinate: step 4/4. In terms of biological role, catalyzes the decarboxylation of four acetate groups of uroporphyrinogen-III to yield coproporphyrinogen-III. This is Uroporphyrinogen decarboxylase from Azotobacter vinelandii (strain DJ / ATCC BAA-1303).